A 401-amino-acid chain; its full sequence is Thermophilic serine proteinase (401 aa).

The first 24 residues, 1–24, serve as a signal peptide directing secretion; sequence MKFKAIVSLSLAVSMSLFPFLVEA. The propeptide occupies 25-121; the sequence is ASNDGVESPK…AEPNYLFNAA (97 aa). Residue Asp-126 coordinates Ca(2+). A Peptidase S8 domain is found at 133-399; the sequence is QYGPQNTYTD…YGRINSYNAV (267 aa). Asp-160 (charge relay system) is an active-site residue. Pro-168, Asp-169, Asp-171, Asp-179, Asp-184, and Asp-186 together coordinate Ca(2+). His-193 functions as the Charge relay system in the catalytic mechanism. 4 residues coordinate Ca(2+): Glu-204, Asn-207, Thr-209, and Ile-211. A disulfide bridge links Cys-258 with Cys-260. Na(+) is bound by residues Tyr-297, Val-300, and Asp-323. Ser-347 serves as the catalytic Charge relay system.

This sequence belongs to the peptidase S8 family. Requires Ca(2+) as cofactor. The cofactor is Na(+).

The protein localises to the secreted. In Bacillus sp. (strain AK1), this protein is Thermophilic serine proteinase.